The sequence spans 106 residues: Glycine/glutamate-rich protein sgp1 (106 aa).

The first 20 residues, 1–20 (MKYSLIFILTLACLIASSLA), serve as a signal peptide directing secretion. The disordered stretch occupies residues 20–66 (ARPEGEEKPADDAAGDKKEEGAEGDKTAAGGDEGFTGGDGKNAGGAG). Positions 22-45 (PEGEEKPADDAAGDKKEEGAEGDK) are enriched in basic and acidic residues. Residues 50 to 66 (GDEGFTGGDGKNAGGAG) show a composition bias toward gly residues.

It is found in the secreted. In Glossina morsitans morsitans (Savannah tsetse fly), this protein is Glycine/glutamate-rich protein sgp1 (sgp1).